Consider the following 393-residue polypeptide: Bifunctional enzyme IspD/IspF (393 aa).

The segment at 1–234 is 2-C-methyl-D-erythritol 4-phosphate cytidylyltransferase; the sequence is MTTSQRTAAI…ARLAASLGDI (234 aa). The interval 235–393 is 2-C-methyl-D-erythritol 2,4-cyclodiphosphate synthase; sequence RTGTGYDVHA…SATIRLPWGA (159 aa). A divalent metal cation is bound by residues aspartate 241 and histidine 243. Residues 241-243 and 267-268 each bind 4-CDP-2-C-methyl-D-erythritol 2-phosphate; these read DVH and HS. Residue histidine 275 participates in a divalent metal cation binding. 4-CDP-2-C-methyl-D-erythritol 2-phosphate is bound by residues 289–291, 365–368, phenylalanine 372, and arginine 375; these read DIG and TTSE.

The protein in the N-terminal section; belongs to the IspD/TarI cytidylyltransferase family. IspD subfamily. This sequence in the C-terminal section; belongs to the IspF family. A divalent metal cation serves as cofactor.

The catalysed reaction is 2-C-methyl-D-erythritol 4-phosphate + CTP + H(+) = 4-CDP-2-C-methyl-D-erythritol + diphosphate. It carries out the reaction 4-CDP-2-C-methyl-D-erythritol 2-phosphate = 2-C-methyl-D-erythritol 2,4-cyclic diphosphate + CMP. It participates in isoprenoid biosynthesis; isopentenyl diphosphate biosynthesis via DXP pathway; isopentenyl diphosphate from 1-deoxy-D-xylulose 5-phosphate: step 2/6. It functions in the pathway isoprenoid biosynthesis; isopentenyl diphosphate biosynthesis via DXP pathway; isopentenyl diphosphate from 1-deoxy-D-xylulose 5-phosphate: step 4/6. Functionally, bifunctional enzyme that catalyzes the formation of 4-diphosphocytidyl-2-C-methyl-D-erythritol from CTP and 2-C-methyl-D-erythritol 4-phosphate (MEP) (IspD), and catalyzes the conversion of 4-diphosphocytidyl-2-C-methyl-D-erythritol 2-phosphate (CDP-ME2P) to 2-C-methyl-D-erythritol 2,4-cyclodiphosphate (ME-CPP) with a corresponding release of cytidine 5-monophosphate (CMP) (IspF). The sequence is that of Bifunctional enzyme IspD/IspF from Bradyrhizobium sp. (strain ORS 278).